Reading from the N-terminus, the 441-residue chain is Malate dehydrogenase [NADP], chloroplastic (441 aa).

Residues 1–58 constitute a chloroplast transit peptide; it reads MALTQLNSTCSKPQLHSSSQLSFLSRTRTRTLPRHYHSTFAPLHRTQHARISCSVAPN. A disulfide bridge links Cys76 with Cys81. 105-111 is a binding site for NADP(+); that stretch reads GAAGMIS. Substrate is bound by residues Arg186 and Arg192. Asn199 is a binding site for NADP(+). Gln206 is a binding site for NAD(+). 223-225 is a binding site for NADP(+); it reads VGN. Positions 225 and 256 each coordinate substrate. Catalysis depends on His281, which acts as the Proton acceptor. Cys417 and Cys429 are joined by a disulfide.

It belongs to the LDH/MDH superfamily. MDH type 2 family. In terms of assembly, homodimer.

Its subcellular location is the plastid. It localises to the chloroplast. The catalysed reaction is (S)-malate + NADP(+) = oxaloacetate + NADPH + H(+). With respect to regulation, chloroplast NADP-MDH is activated upon illumination. In order to be enzymatically active, disulfide bridges on the protein must be reduced by thioredoxin which receives electrons from ferredoxin and the electron transport system of photosynthesis. In terms of biological role, the chloroplastic, NADP-dependent form is essential for the photosynthesis C4 cycle, which allows plants to circumvent the problem of photorespiration. In C4 plants, NADP-MDH activity acts to convert oxaloacetate to malate in chloroplasts of mesophyll cells for transport to the bundle sheath cells. The sequence is that of Malate dehydrogenase [NADP], chloroplastic from Pisum sativum (Garden pea).